Here is a 261-residue protein sequence, read N- to C-terminus: Aquaporin-8 (261 aa).

Residues 1-36 (MSGEQTPMCSMDLPEVKVKTSMAGRCRVFWYEQYVQ) are Cytoplasmic-facing. Residues 37–57 (PCIVELVGSALFIFIGCLSVI) traverse the membrane as a helical segment. Cysteine 53 bears the Cysteine persulfide mark. Cysteine 53 is subject to Cysteine sulfenic acid (-SOH). The Extracellular portion of the chain corresponds to 58–84 (ENSPNTGLLQPALAHGLALGLIIATLG). Residues 85 to 105 (NISGGHFNPAVSLAVTVIGGL) form a helical membrane-spanning segment. The NPA 1 signature appears at 92 to 94 (NPA). The Cytoplasmic segment spans residues 106–107 (KT). The chain crosses the membrane as a helical span at residues 108 to 128 (MLLIPYWISQLFGGLIGAALA). The Extracellular segment spans residues 129–156 (KVVSPEERFWNASGAAFAIVQEQEQVAE). N-linked (GlcNAc...) asparagine glycosylation occurs at asparagine 139. Residues 157–177 (ALGIEIILTMLLVLAVCMGAV) form a helical membrane-spanning segment. Residues 178–183 (NEKTMG) lie on the Cytoplasmic side of the membrane. Residues 184 to 204 (PLAPFSIGFSVIVDILAGGSI) traverse the membrane as a helical segment. The Extracellular segment spans residues 205 to 228 (SGACMNPARAFGPAVMAGYWDFHW). The NPA 2 signature appears at 210–212 (NPA). Residues 229–249 (IYWLGPLLAGLFVGLLIRLLI) form a helical membrane-spanning segment. The Cytoplasmic segment spans residues 250–261 (GDEKTRLILKSR).

The protein belongs to the MIP/aquaporin (TC 1.A.8) family. Sulfenylation at Cys-53(C53-SOH) when hydrogen peroxide flows through the AQP8 channel, making it susceptible to hydrogen sulfide produced by CBS. Post-translationally, persulfidation at Cys-53 is required to gate AQP8 channel; under stress condition, hydrogen peroxide accumulates in the cell leading to CBS activation that produces hydrogen sulfide inducing persulfidation of oxidized Cys-53 (C53-SOH). In terms of processing, N-glycosylated. Expressed in placenta. Highly expressed in the epithelial layer of gall-bladders. Expressed in heart, kidney, submandibular gland, liver, small intestine, colon, testes, and epididymis. In testes, expressed in spermatogenic cells.

The protein resides in the cell membrane. Its subcellular location is the mitochondrion inner membrane. The protein localises to the apical cell membrane. It is found in the basolateral cell membrane. It localises to the smooth endoplasmic reticulum membrane. The catalysed reaction is H2O(in) = H2O(out). It catalyses the reaction urea(in) = urea(out). It carries out the reaction NH4(+)(in) = NH4(+)(out). The enzyme catalyses H2O2(out) = H2O2(in). The catalysed reaction is formamide(out) = formamide(in). It catalyses the reaction methylamine(out) = methylamine(in). Reversibly gated by a two-step sulfenylation-persulfidation process in cells undergoing diverse stresses. In terms of biological role, channel that allows the facilitated permeation of water and uncharged molecules, such as hydrogen peroxide and the neutral form of ammonia (NH3), through cellular membranes such as plasma membrane, inner mitochondrial membrane and endoplasmic reticulum membrane of several tissues. The transport of ammonia neutral form induces a parallel transport of proton, at alkaline pH when the concentration of ammonia is high. However, it is unclear whether the transport of proton takes place via the aquaporin or via an endogenous pathway. Also, may transport ammonia analogs such as formamide and methylamine, a transport favourited at basic pH due to the increase of unprotonated (neutral) form, which is expected to favor diffusion. In vitro, may be also permeable to urea but not to glycerol. Does not transport urea or glycerol. The water transport mechanism is mercury- and copper-sensitive and passive in response to osmotic driving forces. At the canicular plasma membrane, mediates the osmotic transport of water toward the bile canaliculus and facilitates the cAMP-induced bile canalicular water secretion, a process involved in bile formation. In addition, mediates the hydrogen peroxide release from hepatocyte mitochondria that modulates the SREBF2-mediated cholesterol synthesis and facilitates the mitochondrial ammonia uptake which is metabolized into urea, mainly under glucagon stimulation. In B cells, transports the CYBB-generated hydrogen peroxide from the external leaflet of the plasma membrane to the cytosol to promote B cell activation and differentiation for signal amplification. In the small intestine and colon system, mediates water transport through mitochondria and apical membrane of epithelial cells. May play an important role in the adaptive response of proximal tubule cells to acidosis possibly facilitating mitochondrial ammonia transport. The sequence is that of Aquaporin-8 from Mus musculus (Mouse).